Here is a 658-residue protein sequence, read N- to C-terminus: Integrator complex subunit 9 (658 aa).

The tract at residues 550-574 is disordered; sequence KHVLQLPPKPPQPPTSKKRKRVSDD. A Nuclear localization signal motif is present at residues 566–570; sequence KKRKR.

Belongs to the metallo-beta-lactamase superfamily. RNA-metabolizing metallo-beta-lactamase-like family. INTS9 subfamily. Component of the Integrator complex, composed of core subunits INTS1, INTS2, INTS3, INTS4, INTS5, INTS6, INTS7, INTS8, INTS9/RC74, INTS10, INTS11/CPSF3L, INTS12, INTS13, INTS14 and INTS15. The core complex associates with protein phosphatase 2A subunits PPP2CA and PPP2R1A, to form the Integrator-PP2A (INTAC) complex. INTS9 is part of the RNA endonuclease subcomplex, composed of INTS4, INTS9, INTS11 and inositol hexakisphosphate (InsP6).

Its subcellular location is the nucleus. It is found in the cytoplasm. Its function is as follows. Component of the integrator complex, a multiprotein complex that terminates RNA polymerase II (Pol II) transcription in the promoter-proximal region of genes. The integrator complex provides a quality checkpoint during transcription elongation by driving premature transcription termination of transcripts that are unfavorably configured for transcriptional elongation: the complex terminates transcription by (1) catalyzing dephosphorylation of the C-terminal domain (CTD) of Pol II subunit POLR2A/RPB1 and SUPT5H/SPT5, (2) degrading the exiting nascent RNA transcript via endonuclease activity and (3) promoting the release of Pol II from bound DNA. The integrator complex is also involved in terminating the synthesis of non-coding Pol II transcripts, such as enhancer RNAs (eRNAs), small nuclear RNAs (snRNAs), telomerase RNAs and long non-coding RNAs (lncRNAs). The polypeptide is Integrator complex subunit 9 (INTS9) (Gallus gallus (Chicken)).